We begin with the raw amino-acid sequence, 332 residues long: C4-dicarboxylate-binding periplasmic protein DctP (332 aa).

Residues 1-22 (MFKPLTLIAASILAVTSFNAAA) form the signal peptide.

This sequence belongs to the bacterial solute-binding protein 7 family. As to quaternary structure, the complex comprises the extracytoplasmic solute receptor protein DctP, and the two transmembrane proteins DctQ and DctM.

The protein resides in the periplasm. Its function is as follows. Part of the tripartite ATP-independent periplasmic (TRAP) transport system DctPQM involved in C4-dicarboxylates uptake. This is C4-dicarboxylate-binding periplasmic protein DctP from Vibrio cholerae serotype O1 (strain ATCC 39315 / El Tor Inaba N16961).